The primary structure comprises 273 residues: Tyrosinase (273 aa).

Cu cation contacts are provided by H38, H54, H63, H190, H194, and H216.

This sequence belongs to the tyrosinase family. It depends on Cu(2+) as a cofactor.

It carries out the reaction 2 L-dopa + O2 = 2 L-dopaquinone + 2 H2O. It catalyses the reaction L-tyrosine + O2 = L-dopaquinone + H2O. Its function is as follows. This is a copper-containing oxidase that functions in the formation of pigments such as melanins and other polyphenolic compounds. This Streptomyces antibioticus protein is Tyrosinase (melC2).